Here is a 426-residue protein sequence, read N- to C-terminus: Kynureninase (426 aa).

Pyridoxal 5'-phosphate is bound by residues leucine 110, serine 111, phenylalanine 138–aspartate 141, aspartate 223, histidine 226, and tyrosine 248. An N6-(pyridoxal phosphate)lysine modification is found at lysine 249. Pyridoxal 5'-phosphate-binding residues include tryptophan 279 and asparagine 307.

The protein belongs to the kynureninase family. In terms of assembly, homodimer. It depends on pyridoxal 5'-phosphate as a cofactor.

The catalysed reaction is L-kynurenine + H2O = anthranilate + L-alanine + H(+). It catalyses the reaction 3-hydroxy-L-kynurenine + H2O = 3-hydroxyanthranilate + L-alanine + H(+). Its pathway is amino-acid degradation; L-kynurenine degradation; L-alanine and anthranilate from L-kynurenine: step 1/1. It functions in the pathway cofactor biosynthesis; NAD(+) biosynthesis; quinolinate from L-kynurenine: step 2/3. Functionally, catalyzes the cleavage of L-kynurenine (L-Kyn) and L-3-hydroxykynurenine (L-3OHKyn) into anthranilic acid (AA) and 3-hydroxyanthranilic acid (3-OHAA), respectively. The sequence is that of Kynureninase from Myxococcus xanthus (strain DK1622).